Here is an 88-residue protein sequence, read N- to C-terminus: Exodeoxyribonuclease 7 small subunit (88 aa).

Belongs to the XseB family. As to quaternary structure, heterooligomer composed of large and small subunits.

The protein resides in the cytoplasm. The catalysed reaction is Exonucleolytic cleavage in either 5'- to 3'- or 3'- to 5'-direction to yield nucleoside 5'-phosphates.. Its function is as follows. Bidirectionally degrades single-stranded DNA into large acid-insoluble oligonucleotides, which are then degraded further into small acid-soluble oligonucleotides. The chain is Exodeoxyribonuclease 7 small subunit from Tolumonas auensis (strain DSM 9187 / NBRC 110442 / TA 4).